The following is a 577-amino-acid chain: MQSTLLQTKPAFSWKALGWALLYFWFFSTLLQAIIYLTGYSGTNGLRDSLLYSSLWLIPVFLFPGRIRVIAAVIGVVLWAASLAALSYYVIYGQEFSQSVLFVMFETNANEASEYLSQYFSLKIVLVALAYTVAAILLWTRLRPVYIPSPWRYLVSFALLYGLILHPIAMNTFIKHKSMEKTLDSLASRMEPAAPWQFITGYYQYRLQLASLNKLLNENDALPPLANFQDHSGDAPRTLVLVIGESTQRGRMSLYGYPRETTPELDALHKTDPGLTVFNNVVTSRPYTIEILQQALTFADEKNPDWYLTKPSLMNMMKQAGYKTFWITNQQTMTARNTMLTVFSKQTDKQFYMNQQRTQSAREYDSNVLAPFKAVLADPAPKKFIIVHLLGTHIKYKFRYPENQGKFDGKTDHVPPGLSSDELESYNDYDNANLYNDYVVASLIKDYKATDPNGFLLYFSDHGEEVYDTPPHKTQGRNEDSPTRHMYTVPFLLWTSEKWQAAHPRDFSQDVDRKYSSSELIHTWSDLAGLTYDGYDPTRSITNPQFKETTRWIGNPYKKNALIDYDTLPYGDQVGNQ.

The next 5 helical transmembrane spans lie at 17–37 (LGWA…IIYL), 45–65 (GLRD…LFPG), 69–89 (VIAA…LSYY), 119–139 (YFSL…ILLW), and 154–174 (LVSF…NTFI).

This sequence belongs to the phosphoethanolamine transferase family. EptC/CptA subfamily.

The protein localises to the cell inner membrane. It functions in the pathway bacterial outer membrane biogenesis; LPS core biosynthesis. In terms of biological role, catalyzes the addition of a phosphoethanolamine moiety to the outer membrane lipopolysaccharide core. This Salmonella typhimurium (strain LT2 / SGSC1412 / ATCC 700720) protein is Phosphoethanolamine transferase CptA (cptA).